We begin with the raw amino-acid sequence, 82 residues long: Large ribosomal subunit protein bL31 (82 aa).

It belongs to the bacterial ribosomal protein bL31 family. Type A subfamily. Part of the 50S ribosomal subunit.

Functionally, binds the 23S rRNA. The chain is Large ribosomal subunit protein bL31 from Rippkaea orientalis (strain PCC 8801 / RF-1) (Cyanothece sp. (strain PCC 8801)).